Here is a 360-residue protein sequence, read N- to C-terminus: Phosphoserine aminotransferase (360 aa).

Position 41 (R41) interacts with L-glutamate. Pyridoxal 5'-phosphate is bound by residues W101, T152, D172, and Q195. K196 carries the N6-(pyridoxal phosphate)lysine modification. Pyridoxal 5'-phosphate is bound at residue 237–238 (NT).

The protein belongs to the class-V pyridoxal-phosphate-dependent aminotransferase family. SerC subfamily. In terms of assembly, homodimer. Pyridoxal 5'-phosphate serves as cofactor.

It is found in the cytoplasm. It catalyses the reaction O-phospho-L-serine + 2-oxoglutarate = 3-phosphooxypyruvate + L-glutamate. It carries out the reaction 4-(phosphooxy)-L-threonine + 2-oxoglutarate = (R)-3-hydroxy-2-oxo-4-phosphooxybutanoate + L-glutamate. The protein operates within amino-acid biosynthesis; L-serine biosynthesis; L-serine from 3-phospho-D-glycerate: step 2/3. It functions in the pathway cofactor biosynthesis; pyridoxine 5'-phosphate biosynthesis; pyridoxine 5'-phosphate from D-erythrose 4-phosphate: step 3/5. In terms of biological role, catalyzes the reversible conversion of 3-phosphohydroxypyruvate to phosphoserine and of 3-hydroxy-2-oxo-4-phosphonooxybutanoate to phosphohydroxythreonine. This Paraburkholderia phytofirmans (strain DSM 17436 / LMG 22146 / PsJN) (Burkholderia phytofirmans) protein is Phosphoserine aminotransferase.